We begin with the raw amino-acid sequence, 229 residues long: Cytochrome b translational activator protein CBS1, mitochondrial (229 aa).

Residues 1-25 (MLRTKVFATTVARISGIRRYIPIRT) constitute a mitochondrion transit peptide.

The protein resides in the mitochondrion inner membrane. MRNA-specific translational activator of cytochrome b. The cytochrome b (COB) leader RNA may represent the target sequence for CBS1 and CBS2, tethering the COB mRNA to the inner mitochondrial membrane, where cotranslational insertion of cytochrome b into the membrane can occur. This chain is Cytochrome b translational activator protein CBS1, mitochondrial (CBS1), found in Saccharomyces cerevisiae (strain ATCC 204508 / S288c) (Baker's yeast).